Here is a 487-residue protein sequence, read N- to C-terminus: Lysine--tRNA ligase (487 aa).

The Mg(2+) site is built by E398 and E405.

It belongs to the class-II aminoacyl-tRNA synthetase family. Homodimer. It depends on Mg(2+) as a cofactor.

It localises to the cytoplasm. It carries out the reaction tRNA(Lys) + L-lysine + ATP = L-lysyl-tRNA(Lys) + AMP + diphosphate. The polypeptide is Lysine--tRNA ligase (Mycoplasma mobile (strain ATCC 43663 / 163K / NCTC 11711) (Mesomycoplasma mobile)).